The sequence spans 426 residues: MKHLTEMVRQHKEGKTNGIYAVCSAHPLVLEAAIRYASANQTPLLIEATSNQVDQFGGYTGMTPADFRGFVCQLADSLNFPQDALILGGDHLGPNRWQNLPAAQAMANADDLIKSYVAAGFKKIHLDCSMSCQDDPIPLTDDIVAERAARLAKVAEETCREHFGAADLEYVIGTEVPVPGGAHETLSELAVTTPDAARATLEAHRHAFEKQGLSAIWPRIIALVVQPGVEFDHTNVIDYQPAKATALSQMVENYETLIFEAHSTDYQTPQSLRQLVIDHFAILKVGPALTFALREALFSLAAIEEELVPAKACSGLRQVLENVMLDRPEYWQSHYHGDGNARRLARGYSYSDRVRYYWPDSQIDDAFAHLVRNLADSPIPLPLISQYLPLQYVKVRSGELQPTPRELIINHIQDILAQYHTACEGQ.

It belongs to the GatZ/KbaZ family. KbaZ subfamily. As to quaternary structure, forms a complex with KbaY.

Its pathway is carbohydrate metabolism; D-tagatose 6-phosphate degradation; D-glyceraldehyde 3-phosphate and glycerone phosphate from D-tagatose 6-phosphate: step 2/2. Functionally, component of the tagatose-1,6-bisphosphate aldolase KbaYZ that is required for full activity and stability of the Y subunit. Could have a chaperone-like function for the proper and stable folding of KbaY. When expressed alone, KbaZ does not show any aldolase activity. The polypeptide is D-tagatose-1,6-bisphosphate aldolase subunit KbaZ (Escherichia coli O7:K1 (strain IAI39 / ExPEC)).